An 85-amino-acid chain; its full sequence is High-potential iron-sulfur protein (85 aa).

The [4Fe-4S] cluster site is built by Cys43, Cys46, Cys63, and Cys77.

It belongs to the high-potential iron-sulfur protein (HiPIP) family. As to quaternary structure, homodimer.

The protein localises to the periplasm. Its function is as follows. Specific class of high-redox-potential 4Fe-4S ferredoxins. Functions in anaerobic electron transport in most purple and in some other photosynthetic bacteria and in at least one genus (Paracoccus) of halophilic, denitrifying bacteria. The chain is High-potential iron-sulfur protein from Allochromatium warmingii (Chromatium warmingii).